A 340-amino-acid polypeptide reads, in one-letter code: MGAPHFGPGGVQVGALLLLGFAGLVSGLSLEPVYWNSANKRFQAEGGYVLYPQIGDRLDLLCPRARPPGPHSSPSYEFYKLYLVEGAQGRRCEAPPAPNLLLTCDRPDLDLRFTIKFQEYSPNLWGHEFRSHHDYYIIATSDGTREGLESLQGGVCLTRGMKVLLRVGQSPRGGAVPRKPVSEMPMERDRGAAHSAEPGRDTIPGDPSSNATSRGAEGPLPPPSMPAVAGAAGGMALLLLGVAGAGGAMCWRRRRAKPSESRHPGPGSFGRGGSLGLGGGGGMGPREAEPGELGIALRGGGTADPPFCPHYEKVSGDYGHPVYIVQDGPPQSPPNIYYKV.

The signal sequence occupies residues 1–27; the sequence is MGAPHFGPGGVQVGALLLLGFAGLVSG. Residues 28-167 enclose the Ephrin RBD domain; sequence LSLEPVYWNS…TRGMKVLLRV (140 aa). Over 28–227 the chain is Extracellular; sequence LSLEPVYWNS…GPLPPPSMPA (200 aa). Cystine bridges form between cysteine 62–cysteine 104 and cysteine 92–cysteine 156. Residues 168 to 227 form a disordered region; sequence GQSPRGGAVPRKPVSEMPMERDRGAAHSAEPGRDTIPGDPSSNATSRGAEGPLPPPSMPA. Residues 185-200 show a composition bias toward basic and acidic residues; it reads PMERDRGAAHSAEPGR. Asparagine 210 carries an N-linked (GlcNAc...) asparagine glycan. A helical transmembrane segment spans residues 228–248; that stretch reads VAGAAGGMALLLLGVAGAGGA. Topologically, residues 249-340 are cytoplasmic; sequence MCWRRRRAKP…QSPPNIYYKV (92 aa). Positions 254-300 are disordered; it reads RRAKPSESRHPGPGSFGRGGSLGLGGGGGMGPREAEPGELGIALRGG. Residues 267-284 are compositionally biased toward gly residues; that stretch reads GSFGRGGSLGLGGGGGMG. Arginine 271 bears the Omega-N-methylarginine mark. Serine 274 is subject to Phosphoserine. Residues 338–340 carry the PDZ-binding motif; it reads YKV.

Belongs to the ephrin family. In terms of assembly, interacts with GRIP1 and GRIP2. Expressed on lateral floor plate cells, specifically on commissural axon segments that have passed through the floor plate. Expressed in cells of the retinal ganglion cell layer during retinal axon guidance to the optic disk. Expressed in myogenic progenitor cells.

It localises to the membrane. Functionally, cell surface transmembrane ligand for Eph receptors, a family of receptor tyrosine kinases which are crucial for migration, repulsion and adhesion during neuronal, vascular and epithelial development. Binds promiscuously Eph receptors residing on adjacent cells, leading to contact-dependent bidirectional signaling into neighboring cells. The signaling pathway downstream of the receptor is referred to as forward signaling while the signaling pathway downstream of the ephrin ligand is referred to as reverse signaling. May play a pivotal role in forebrain function. Binds to, and induce the collapse of, commissural axons/growth cones in vitro. May play a role in constraining the orientation of longitudinally projecting axons. The sequence is that of Ephrin-B3 (Efnb3) from Mus musculus (Mouse).